Consider the following 297-residue polypeptide: Syntaxin-4 (297 aa).

Residues methionine 1–aspartate 12 are compositionally biased toward basic and acidic residues. A disordered region spans residues methionine 1–glutamate 21. The Cytoplasmic portion of the chain corresponds to methionine 1 to leucine 275. Residues serine 14 and serine 15 each carry the phosphoserine modification. Threonine 31 carries the post-translational modification Phosphothreonine. A phosphoserine mark is found at serine 36, serine 117, serine 208, and serine 248. The stretch at histidine 43 to threonine 163 forms a coiled coil. The tract at residues glutamate 154–glycine 297 is interaction with CENPF. Residues leucine 200–alanine 262 form the t-SNARE coiled-coil homology domain. Residues isoleucine 276 to valine 296 form a helical; Anchor for type IV membrane protein membrane-spanning segment. A topological domain (extracellular) is located at residue glycine 297.

Belongs to the syntaxin family. In terms of assembly, component of the SNARE complex composed of STX4, SNAP23 and VAMP7 that interacts with SYT7 during lysosomal exocytosis. Found in a complex with VAMP8 and SNAP23. Detected in a complex with SNAP23 and STXBP4. Interacts with VAMP2. Interacts with SNAP23 and SNAPIN. Interacts with LLGL1. Interacts (via C-terminus) with CENPF. Interacts with DOC2B. Interacts with STXBP6. Interacts with STXBP3; excludes interaction with DOC2B and SNAP25. Interacts with STXBP4; excludes interaction with VAMP2. Interacts with STXBP5L. In terms of tissue distribution, expressed in neutrophils and neutrophil-differentiated HL-60 cells. Expression in neutrophils increases with differentiation.

The protein localises to the cell membrane. Its subcellular location is the cell projection. It localises to the neuron projection. The protein resides in the stereocilium. Functionally, plasma membrane t-SNARE that mediates docking of transport vesicles. Necessary for the translocation of SLC2A4 from intracellular vesicles to the plasma membrane. In neurons, recruited at neurite tips to membrane domains rich in the phospholipid 1-oleoyl-2-palmitoyl-PC (OPPC) which promotes neurite tip surface expression of the dopamine transporter SLC6A3/DAT by facilitating fusion of SLC6A3-containing transport vesicles with the plasma membrane. Together with STXB3 and VAMP2, may also play a role in docking/fusion of intracellular GLUT4-containing vesicles with the cell surface in adipocytes and in docking of synaptic vesicles at presynaptic active zones. Required for normal hearing. This is Syntaxin-4 (STX4) from Homo sapiens (Human).